The sequence spans 475 residues: Aspartyl/glutamyl-tRNA(Asn/Gln) amidotransferase subunit B (475 aa).

It belongs to the GatB/GatE family. GatB subfamily. In terms of assembly, heterotrimer of A, B and C subunits.

The enzyme catalyses L-glutamyl-tRNA(Gln) + L-glutamine + ATP + H2O = L-glutaminyl-tRNA(Gln) + L-glutamate + ADP + phosphate + H(+). It catalyses the reaction L-aspartyl-tRNA(Asn) + L-glutamine + ATP + H2O = L-asparaginyl-tRNA(Asn) + L-glutamate + ADP + phosphate + 2 H(+). In terms of biological role, allows the formation of correctly charged Asn-tRNA(Asn) or Gln-tRNA(Gln) through the transamidation of misacylated Asp-tRNA(Asn) or Glu-tRNA(Gln) in organisms which lack either or both of asparaginyl-tRNA or glutaminyl-tRNA synthetases. The reaction takes place in the presence of glutamine and ATP through an activated phospho-Asp-tRNA(Asn) or phospho-Glu-tRNA(Gln). This is Aspartyl/glutamyl-tRNA(Asn/Gln) amidotransferase subunit B from Chlorobaculum tepidum (strain ATCC 49652 / DSM 12025 / NBRC 103806 / TLS) (Chlorobium tepidum).